Consider the following 440-residue polypeptide: 3-phosphoshikimate 1-carboxyvinyltransferase (440 aa).

Residues Lys-26, Ser-27, and Arg-31 each coordinate 3-phosphoshikimate. Lys-26 contributes to the phosphoenolpyruvate binding site. Phosphoenolpyruvate is bound by residues Gly-100 and Arg-134. 3-phosphoshikimate is bound by residues Ser-180, Ser-181, Gln-182, Ser-208, Asp-323, Asn-346, and Lys-350. Gln-182 is a phosphoenolpyruvate binding site. Catalysis depends on Asp-323, which acts as the Proton acceptor. The phosphoenolpyruvate site is built by Arg-354, Arg-398, and Lys-423.

Belongs to the EPSP synthase family. In terms of assembly, monomer.

Its subcellular location is the cytoplasm. The catalysed reaction is 3-phosphoshikimate + phosphoenolpyruvate = 5-O-(1-carboxyvinyl)-3-phosphoshikimate + phosphate. It functions in the pathway metabolic intermediate biosynthesis; chorismate biosynthesis; chorismate from D-erythrose 4-phosphate and phosphoenolpyruvate: step 6/7. Functionally, catalyzes the transfer of the enolpyruvyl moiety of phosphoenolpyruvate (PEP) to the 5-hydroxyl of shikimate-3-phosphate (S3P) to produce enolpyruvyl shikimate-3-phosphate and inorganic phosphate. In Pasteurella multocida (strain Pm70), this protein is 3-phosphoshikimate 1-carboxyvinyltransferase.